The following is a 103-amino-acid chain: Pyrimidine/purine nucleoside phosphorylase (103 aa).

The protein belongs to the nucleoside phosphorylase PpnP family.

It carries out the reaction a purine D-ribonucleoside + phosphate = a purine nucleobase + alpha-D-ribose 1-phosphate. The catalysed reaction is adenosine + phosphate = alpha-D-ribose 1-phosphate + adenine. It catalyses the reaction cytidine + phosphate = cytosine + alpha-D-ribose 1-phosphate. The enzyme catalyses guanosine + phosphate = alpha-D-ribose 1-phosphate + guanine. It carries out the reaction inosine + phosphate = alpha-D-ribose 1-phosphate + hypoxanthine. The catalysed reaction is thymidine + phosphate = 2-deoxy-alpha-D-ribose 1-phosphate + thymine. It catalyses the reaction uridine + phosphate = alpha-D-ribose 1-phosphate + uracil. The enzyme catalyses xanthosine + phosphate = alpha-D-ribose 1-phosphate + xanthine. Functionally, catalyzes the phosphorolysis of diverse nucleosides, yielding D-ribose 1-phosphate and the respective free bases. Can use uridine, adenosine, guanosine, cytidine, thymidine, inosine and xanthosine as substrates. Also catalyzes the reverse reactions. The chain is Pyrimidine/purine nucleoside phosphorylase from Shewanella baltica (strain OS223).